The primary structure comprises 422 residues: tRNA hydroxylation protein P (422 aa).

The signal sequence occupies residues 1 to 58 (MNQVELLSPAGNLKKLKIALNYGADAVYGGVSHFSLRNRAGKEFTLETFKEGIDYAHA).

This sequence belongs to the peptidase U32 family.

Functionally, involved in prephenate-dependent formation of 5-hydroxyuridine (ho5U) modification at position 34 in tRNAs, the first step in 5-carboxymethoxyuridine (cmo5U) biosynthesis. The sequence is that of tRNA hydroxylation protein P from Helicobacter pylori (strain J99 / ATCC 700824) (Campylobacter pylori J99).